The primary structure comprises 208 residues: MSKLSKRQEEILAYIKDEVKKKGYPPSVREIGEAVGLASSSTVHGHLARLEKKGYIRRDPTKPRAIEVLSLGFDNDTFVKKETASFIPVIGKVTAGVPITAVENVEDYLPLPDHLAAYDNTYALVIQGESMIEAGIYDGDQVIVRQQQTADNGDIIVAMTEDNEATVKRFFREKDYIRLQPENSSMEPIILENCTILGKVIGVFRTIH.

A DNA-binding region (H-T-H motif) is located at residues 28–48; the sequence is VREIGEAVGLASSSTVHGHLA. Active-site for autocatalytic cleavage activity residues include serine 130 and lysine 168.

The protein belongs to the peptidase S24 family. In terms of assembly, homodimer.

It carries out the reaction Hydrolysis of Ala-|-Gly bond in repressor LexA.. Its function is as follows. Represses a number of genes involved in the response to DNA damage (SOS response), including recA and lexA. In the presence of single-stranded DNA, RecA interacts with LexA causing an autocatalytic cleavage which disrupts the DNA-binding part of LexA, leading to derepression of the SOS regulon and eventually DNA repair. This is LexA repressor from Shouchella clausii (strain KSM-K16) (Alkalihalobacillus clausii).